We begin with the raw amino-acid sequence, 363 residues long: G-protein coupled receptor 6 (363 aa).

The Extracellular segment spans residues Met-1–Pro-75. Residues Asn-2 and Asn-9 are each glycosylated (N-linked (GlcNAc...) asparagine). Residues Ala-28–Pro-51 form a disordered region. An N-linked (GlcNAc...) asparagine glycan is attached at Asn-52. The chain crosses the membrane as a helical span at residues Trp-76–Val-95. At Ala-96–Pro-107 the chain is on the cytoplasmic side. Residues Met-108–Val-131 form a helical membrane-spanning segment. Topologically, residues Phe-132–Leu-143 are extracellular. Residues Leu-144–Val-165 traverse the membrane as a helical segment. Topologically, residues Asp-166–Val-186 are cytoplasmic. A helical membrane pass occupies residues His-187–Leu-206. At Gly-207–Leu-231 the chain is on the extracellular side. The chain crosses the membrane as a helical span at residues Ser-232–Cys-250. Over Gln-251–Gly-278 the chain is Cytoplasmic. The helical transmembrane segment at Val-279–Gln-305 threads the bilayer. Residues Glu-306 to Ile-310 lie on the Extracellular side of the membrane. Residues Tyr-311–Phe-332 form a helical membrane-spanning segment. Over Arg-333–Val-363 the chain is Cytoplasmic. Residue Cys-346 is the site of S-palmitoyl cysteine attachment. Ser-357, Ser-359, and Ser-361 each carry phosphoserine.

The protein belongs to the G-protein coupled receptor 1 family. As to expression, expressed in the brain, with a prominent distribution in striatum.

It is found in the cell membrane. Its function is as follows. Orphan receptor with constitutive G(s) signaling activity that activate cyclic AMP. Promotes neurite outgrowth and blocks myelin inhibition in neurons. The chain is G-protein coupled receptor 6 (Gpr6) from Rattus norvegicus (Rat).